The chain runs to 79 residues: Sulfur carrier protein TusA (79 aa).

Cys-17 functions as the Cysteine persulfide intermediate in the catalytic mechanism.

The protein belongs to the sulfur carrier protein TusA family.

Its subcellular location is the cytoplasm. Functionally, sulfur carrier protein which probably makes part of a sulfur-relay system. This chain is Sulfur carrier protein TusA, found in Idiomarina loihiensis (strain ATCC BAA-735 / DSM 15497 / L2-TR).